A 248-amino-acid chain; its full sequence is Large ribosomal subunit protein uL2 (248 aa).

Residues 203–248 (AHPAGGGHHPKGLTPAPRNAPPGRKVGHIAPRRTGRKKGASRTPTQ) form a disordered region. Basic residues predominate over residues 227 to 242 (KVGHIAPRRTGRKKGA).

This sequence belongs to the universal ribosomal protein uL2 family. Part of the 50S ribosomal subunit. Forms a bridge to the 30S subunit in the 70S ribosome.

In terms of biological role, one of the primary rRNA binding proteins. Required for association of the 30S and 50S subunits to form the 70S ribosome, for tRNA binding and peptide bond formation. It has been suggested to have peptidyltransferase activity; this is somewhat controversial. Makes several contacts with the 16S rRNA in the 70S ribosome. This Thermofilum pendens (strain DSM 2475 / Hrk 5) protein is Large ribosomal subunit protein uL2.